A 323-amino-acid polypeptide reads, in one-letter code: HTH-type transcriptional activator CmpR (323 aa).

In terms of domain architecture, HTH lysR-type spans 4–61; it reads LTLHQLKVFEAAARHSSFTRAAEELYLTQPTVSIQVKQLTKAVGLPLFEQIGKRLYLT. The H-T-H motif DNA-binding region spans 21-40; that stretch reads FTRAAEELYLTQPTVSIQVK. The disordered stretch occupies residues 304-323; the sequence is IPESTTTDPELDAPQPVVGV.

It belongs to the LysR transcriptional regulatory family.

The protein localises to the cytoplasm. Its function is as follows. Activates transcription of the cmpABCD operon under carbon dioxide-limited conditions. The protein is HTH-type transcriptional activator CmpR (cmpR) of Synechococcus elongatus (strain ATCC 33912 / PCC 7942 / FACHB-805) (Anacystis nidulans R2).